Reading from the N-terminus, the 342-residue chain is MSDQLEASIKNILEQKTLKWIFVGGKGGVGKTTCSCSLAAQLSKVRERVLLISTDPAHNISDAFSQKFTKTPTLVEGFKNLFAMEIDSNPNGEGVEMGNIEEMLQNAAQNEGGSGGFSMGKDFLQSFAGGLPGIDEAMSFGEMIKLIDSLDFDVVVFDTAPTGHTLRLLQFPTLLEKVFTKILSLQGMFGPMMNQFGGMFGMGGGSMNEMIEKMTTTLESVKKMNAQFKDPNCTTFVCVCIAEFLSLYETERLIQELSKQGIDTHNIIVNQLLFPDTDANGTVSCRKCASRQAIQSKYLTDIDELYEDFHVVKLPLLEAEVRGGPAILQFSERMVDPEANKN.

Position 26–33 (K26–T33) interacts with ATP. The active site involves D55. ATP contacts are provided by E243 and N270. Zn(2+) contacts are provided by C285 and C288.

The protein belongs to the arsA ATPase family. As to quaternary structure, homodimer.

The protein localises to the cytoplasm. It localises to the endoplasmic reticulum. Its function is as follows. ATPase required for the post-translational delivery of tail-anchored (TA) proteins to the endoplasmic reticulum. Recognizes and selectively binds the transmembrane domain of TA proteins in the cytosol. This complex then targets to the endoplasmic reticulum by membrane-bound receptors, where the tail-anchored protein is released for insertion. This process is regulated by ATP binding and hydrolysis. ATP binding drives the homodimer towards the closed dimer state, facilitating recognition of newly synthesized TA membrane proteins. ATP hydrolysis is required for insertion. Subsequently, the homodimer reverts towards the open dimer state, lowering its affinity for the membrane-bound receptor, and returning it to the cytosol to initiate a new round of targeting. May be involved in insulin signaling. The sequence is that of ATPase asna-1 from Caenorhabditis elegans.